The sequence spans 250 residues: Triosephosphate isomerase (250 aa).

A substrate-binding site is contributed by 9 to 11; sequence NWK. The active-site Electrophile is the H95. The active-site Proton acceptor is the E167. Residues G173, S213, and 234 to 235 contribute to the substrate site; that span reads GG.

Belongs to the triosephosphate isomerase family. Homodimer.

The protein resides in the cytoplasm. It carries out the reaction D-glyceraldehyde 3-phosphate = dihydroxyacetone phosphate. The protein operates within carbohydrate biosynthesis; gluconeogenesis. It participates in carbohydrate degradation; glycolysis; D-glyceraldehyde 3-phosphate from glycerone phosphate: step 1/1. Its function is as follows. Involved in the gluconeogenesis. Catalyzes stereospecifically the conversion of dihydroxyacetone phosphate (DHAP) to D-glyceraldehyde-3-phosphate (G3P). This Flavobacterium psychrophilum (strain ATCC 49511 / DSM 21280 / CIP 103535 / JIP02/86) protein is Triosephosphate isomerase.